A 153-amino-acid chain; its full sequence is Small ribosomal subunit protein uS9 (153 aa).

Positions 1–19 are enriched in low complexity; that stretch reads MTAPADEAPAVEDAPVAED. Disordered regions lie at residues 1–23 and 121–153; these read MTAP…IAPV and LKKA…YSKR. Residues 129–138 are compositionally biased toward basic and acidic residues; it reads RDSREKERKK. The segment covering 139–153 has biased composition (basic residues); that stretch reads YGLKKARKAPQYSKR.

Belongs to the universal ribosomal protein uS9 family.

The chain is Small ribosomal subunit protein uS9 from Saccharopolyspora erythraea (strain ATCC 11635 / DSM 40517 / JCM 4748 / NBRC 13426 / NCIMB 8594 / NRRL 2338).